We begin with the raw amino-acid sequence, 95 residues long: Aspartyl/glutamyl-tRNA(Asn/Gln) amidotransferase subunit C (95 aa).

This sequence belongs to the GatC family. As to quaternary structure, heterotrimer of A, B and C subunits.

It catalyses the reaction L-glutamyl-tRNA(Gln) + L-glutamine + ATP + H2O = L-glutaminyl-tRNA(Gln) + L-glutamate + ADP + phosphate + H(+). It carries out the reaction L-aspartyl-tRNA(Asn) + L-glutamine + ATP + H2O = L-asparaginyl-tRNA(Asn) + L-glutamate + ADP + phosphate + 2 H(+). In terms of biological role, allows the formation of correctly charged Asn-tRNA(Asn) or Gln-tRNA(Gln) through the transamidation of misacylated Asp-tRNA(Asn) or Glu-tRNA(Gln) in organisms which lack either or both of asparaginyl-tRNA or glutaminyl-tRNA synthetases. The reaction takes place in the presence of glutamine and ATP through an activated phospho-Asp-tRNA(Asn) or phospho-Glu-tRNA(Gln). The sequence is that of Aspartyl/glutamyl-tRNA(Asn/Gln) amidotransferase subunit C from Laribacter hongkongensis (strain HLHK9).